A 631-amino-acid chain; its full sequence is Phosphomethylpyrimidine synthase (631 aa).

Substrate contacts are provided by residues Asn-239, Met-268, Tyr-297, His-333, 353 to 355, 394 to 397, and Glu-433; these read SRG and DGLR. Residue His-437 participates in Zn(2+) binding. Residue Tyr-460 participates in substrate binding. Residue His-501 coordinates Zn(2+). [4Fe-4S] cluster is bound by residues Cys-581, Cys-584, and Cys-589.

This sequence belongs to the ThiC family. As to quaternary structure, homodimer. Requires [4Fe-4S] cluster as cofactor.

It carries out the reaction 5-amino-1-(5-phospho-beta-D-ribosyl)imidazole + S-adenosyl-L-methionine = 4-amino-2-methyl-5-(phosphooxymethyl)pyrimidine + CO + 5'-deoxyadenosine + formate + L-methionine + 3 H(+). The protein operates within cofactor biosynthesis; thiamine diphosphate biosynthesis. Its function is as follows. Catalyzes the synthesis of the hydroxymethylpyrimidine phosphate (HMP-P) moiety of thiamine from aminoimidazole ribotide (AIR) in a radical S-adenosyl-L-methionine (SAM)-dependent reaction. This chain is Phosphomethylpyrimidine synthase, found in Salmonella typhi.